A 74-amino-acid chain; its full sequence is Large ribosomal subunit protein bL31 (74 aa).

Zn(2+) is bound by residues Cys17, Cys19, Cys38, and Cys41.

It belongs to the bacterial ribosomal protein bL31 family. Type A subfamily. Part of the 50S ribosomal subunit. The cofactor is Zn(2+).

In terms of biological role, binds the 23S rRNA. This is Large ribosomal subunit protein bL31 from Gloeobacter violaceus (strain ATCC 29082 / PCC 7421).